Reading from the N-terminus, the 130-residue chain is Protein ApaG (130 aa).

One can recognise an ApaG domain in the interval 3 to 127; sequence KAETRGIMVT…FSLDSPHLRR (125 aa).

The sequence is that of Protein ApaG from Methylorubrum extorquens (strain CM4 / NCIMB 13688) (Methylobacterium extorquens).